We begin with the raw amino-acid sequence, 294 residues long: Phosphatidylinositol transfer protein SFH5 (294 aa).

The CRAL-TRIO domain maps to 100-266 (HNTELQNVGI…GYGGKDKKNN (167 aa)). 5 residues coordinate heme: Y128, R148, H173, Y175, and K209.

This sequence belongs to the SFH5 family. It depends on heme b as a cofactor.

It localises to the cytoplasm. Its subcellular location is the endoplasmic reticulum membrane. The protein localises to the microsome membrane. The catalysed reaction is a 1,2-diacyl-sn-glycero-3-phospho-(1D-myo-inositol)(in) = a 1,2-diacyl-sn-glycero-3-phospho-(1D-myo-inositol)(out). In terms of biological role, non-classical phosphatidylinositol (PtdIns) transfer protein (PITP), which exhibits PtdIns-binding/transfer activity in the absence of detectable PtdCho-binding/transfer activity. Regulates PtdIns(4,5)P2 homeostasis at the plasma membrane. Heme-binding protein that may play a role in organic oxidant-induced stress responses. The protein is Phosphatidylinositol transfer protein SFH5 (SFH5) of Saccharomyces cerevisiae (strain YJM789) (Baker's yeast).